The sequence spans 433 residues: Homoserine dehydrogenase (433 aa).

NADPH contacts are provided by Thr12, Val13, and Lys102. An NAD(+)-binding site is contributed by Val13. NADP(+)-binding residues include Val13 and Lys102. 4 residues coordinate Na(+): Glu126, Val129, Gly131, and Ile133. Positions 184 and 187 each coordinate NADP(+). Positions 187 and 198 each coordinate L-homoserine. Lys202 (proton donor) is an active-site residue. Gly303 contributes to the NADPH binding site. Residue Gly303 coordinates NAD(+). NADP(+) is bound at residue Gly303. The ACT domain occupies 356 to 433; that stretch reads YCRFLCADVP…EIPSVIRVLS (78 aa).

Belongs to the homoserine dehydrogenase family. A metal cation is required as a cofactor.

The enzyme catalyses L-homoserine + NADP(+) = L-aspartate 4-semialdehyde + NADPH + H(+). It carries out the reaction L-homoserine + NAD(+) = L-aspartate 4-semialdehyde + NADH + H(+). It functions in the pathway amino-acid biosynthesis; L-methionine biosynthesis via de novo pathway; L-homoserine from L-aspartate: step 3/3. Its pathway is amino-acid biosynthesis; L-threonine biosynthesis; L-threonine from L-aspartate: step 3/5. In terms of biological role, catalyzes the conversion of L-aspartate-beta-semialdehyde (L-Asa) to L-homoserine (L-Hse), the third step in the biosynthesis of threonine and methionine from aspartate. The chain is Homoserine dehydrogenase (hom) from Synechocystis sp. (strain ATCC 27184 / PCC 6803 / Kazusa).